Consider the following 259-residue polypeptide: Carbonic anhydrase 1 (259 aa).

Ala1 bears the N-acetylalanine mark. In terms of domain architecture, Alpha-carbonic anhydrase spans 2–258 (HAWGYGPTDG…LKGRHVRASF (257 aa)). Residue His63 is the Proton donor/acceptor of the active site. Zn(2+)-binding residues include His93, His95, and His118. Substrate-binding positions include Thr197 and 197 to 198 (TT).

The protein belongs to the alpha-carbonic anhydrase family. Zn(2+) is required as a cofactor.

The protein localises to the cytoplasm. The enzyme catalyses hydrogencarbonate + H(+) = CO2 + H2O. Functionally, catalyzes the reversible hydration of carbon dioxide. This chain is Carbonic anhydrase 1 (ca1), found in Chionodraco hamatus (Antarctic teleost icefish).